The sequence spans 79 residues: MTITNTIKSLLKKKIPLTVIHVTGDNKHINITAVSDIFNNINTLRRQQIIYKPLMPYIINKTLHAISIKTYSLQEWKNK.

It belongs to the BolA/IbaG family.

This is an uncharacterized protein from Buchnera aphidicola subsp. Baizongia pistaciae (strain Bp).